A 127-amino-acid polypeptide reads, in one-letter code: Dual endothelin-1/VEGF signal peptide receptor (127 aa).

Topologically, residues 1–69 (MSTFYVTAVP…EMKSRWNWGS (69 aa)) are extracellular. A helical transmembrane segment spans residues 70 to 88 (ITCIMCFTCVGSQLSMSSS). The Cytoplasmic portion of the chain corresponds to 89-127 (KASNFSGPLQLYQRGIGHITNPYRRPPAPAWPCSSSGTT).

As to expression, prominently expressed in brain and heart tissues. Weakly expressed in aorta, adrenal gland, and lung tissues.

The protein localises to the cell membrane. Functionally, in the Dahl salt-resistant strain, acts as a dual receptor for both endothelin-1 and the signal sequence of vascular endothelial growth factor A and does not act as a receptor for angiotensin-2. Does not bind the VEGFA mature protein. In the Dahl salt-sensitive strain, acts as a dual endothelin-1/angiotensin-2 receptor that is functionally coupled to a calcium-mobilizing transduction system, responding equivalently to both endothelin-1/EDN1 and angiotensin-2 peptides in a highly specific manner. May play a role in angiogenesis with a significant role in cardiovascular and neural development. This chain is Dual endothelin-1/VEGF signal peptide receptor, found in Rattus norvegicus (Rat).